Consider the following 271-residue polypeptide: MPELPEVEITCRGIRPLVAGRTLTALEVRNPRLRQPVPADLAQTLVGERLQGVRRRAKYLLLDFPHGSVLVHLGMSGSLRVVSADEPAGVHDHVDLVFGAEALRLRDPRRFGLVLWHAGDGLSHPLLAALGREPLERGFTGAWLHEATRGVRLSIKQTLMDAHRVVGVGNIYASESLFRARIHPLAPAGAIGPQRLARLVASVRETLLAAIDAGGSTLRDFVGGDGRAGYFQQQYFVYGREGLACRVCATPVRRVVIGQRSTFFCPRCQRR.

The active-site Schiff-base intermediate with DNA is P2. E3 serves as the catalytic Proton donor. K58 functions as the Proton donor; for beta-elimination activity in the catalytic mechanism. DNA is bound by residues H91 and R109. An FPG-type zinc finger spans residues 236–270 (FVYGREGLACRVCATPVRRVVIGQRSTFFCPRCQR). Catalysis depends on R260, which acts as the Proton donor; for delta-elimination activity.

This sequence belongs to the FPG family. As to quaternary structure, monomer. The cofactor is Zn(2+).

It catalyses the reaction Hydrolysis of DNA containing ring-opened 7-methylguanine residues, releasing 2,6-diamino-4-hydroxy-5-(N-methyl)formamidopyrimidine.. It carries out the reaction 2'-deoxyribonucleotide-(2'-deoxyribose 5'-phosphate)-2'-deoxyribonucleotide-DNA = a 3'-end 2'-deoxyribonucleotide-(2,3-dehydro-2,3-deoxyribose 5'-phosphate)-DNA + a 5'-end 5'-phospho-2'-deoxyribonucleoside-DNA + H(+). Its function is as follows. Involved in base excision repair of DNA damaged by oxidation or by mutagenic agents. Acts as a DNA glycosylase that recognizes and removes damaged bases. Has a preference for oxidized purines, such as 7,8-dihydro-8-oxoguanine (8-oxoG). Has AP (apurinic/apyrimidinic) lyase activity and introduces nicks in the DNA strand. Cleaves the DNA backbone by beta-delta elimination to generate a single-strand break at the site of the removed base with both 3'- and 5'-phosphates. The polypeptide is Formamidopyrimidine-DNA glycosylase (Aromatoleum aromaticum (strain DSM 19018 / LMG 30748 / EbN1) (Azoarcus sp. (strain EbN1))).